The chain runs to 143 residues: Heat shock protein 16 (143 aa).

The 114-residue stretch at 30-143 (QIPGELSPSI…SQTKKQIAIK (114 aa)) folds into the sHSP domain.

This sequence belongs to the small heat shock protein (HSP20) family.

It localises to the cytoplasm. It is found in the nucleus. The polypeptide is Heat shock protein 16 (hsp16) (Schizosaccharomyces pombe (strain 972 / ATCC 24843) (Fission yeast)).